Here is a 332-residue protein sequence, read N- to C-terminus: D-alanine--D-alanine ligase (332 aa).

The 206-residue stretch at 124 to 329 (KMWFSALNIP…FPDYLLSNIN (206 aa)) folds into the ATP-grasp domain. 154-209 (ALVNWGSIFVKAASQGSSVGCYRIDNQEDVASTLAQAFTYSDYVIVEKTISARELE) is an ATP binding site. Asp283, Glu296, and Asn298 together coordinate Mg(2+).

The protein belongs to the D-alanine--D-alanine ligase family. Requires Mg(2+) as cofactor. Mn(2+) serves as cofactor.

It localises to the cytoplasm. It catalyses the reaction 2 D-alanine + ATP = D-alanyl-D-alanine + ADP + phosphate + H(+). Its pathway is cell wall biogenesis; peptidoglycan biosynthesis. Its function is as follows. Cell wall formation. This chain is D-alanine--D-alanine ligase, found in Shewanella piezotolerans (strain WP3 / JCM 13877).